The primary structure comprises 749 residues: Catalase-peroxidase (749 aa).

A compositionally biased stretch (basic and acidic residues) spans 1-12; it reads MSSDTSDTRPPH. Positions 1–40 are disordered; sequence MSSDTSDTRPPHSDSGTQSNSESENPIIDSPEPKAHAPLT. The span at 14-24 shows a compositional bias: polar residues; sequence DSGTQSNSESE. The segment at residues 113–240 is a cross-link (tryptophyl-tyrosyl-methioninium (Trp-Tyr) (with M-266)); it reads WHAAGTYRIF…FGATTMGLIY (128 aa). The active-site Proton acceptor is the histidine 114. The tryptophyl-tyrosyl-methioninium (Tyr-Met) (with W-113) cross-link spans 240 to 266; sequence YVNPEGPEGKPDPLAAAHDIRETFGRM. Histidine 281 is a binding site for heme b.

This sequence belongs to the peroxidase family. Peroxidase/catalase subfamily. In terms of assembly, homodimer or homotetramer. Requires heme b as cofactor. In terms of processing, formation of the three residue Trp-Tyr-Met cross-link is important for the catalase, but not the peroxidase activity of the enzyme.

The catalysed reaction is H2O2 + AH2 = A + 2 H2O. The enzyme catalyses 2 H2O2 = O2 + 2 H2O. Functionally, bifunctional enzyme with both catalase and broad-spectrum peroxidase activity. This Mycobacterium sp. (strain JLS) protein is Catalase-peroxidase.